The sequence spans 499 residues: Hepatic triacylglycerol lipase (499 aa).

The signal sequence occupies residues 1–22; that stretch reads MDTSPLCFSILLVLCIFIQSSA. 2 N-linked (GlcNAc...) asparagine glycosylation sites follow: N42 and N78. The active-site Nucleophile is S168. The active-site Charge relay system is D194. Residues 254-277 form an essential for determining substrate specificity region; it reads CHFLELYRHIAQHGFNAITQTIKC. The active-site Charge relay system is the H279. One can recognise a PLAT domain in the interval 352–486; the sequence is YHYQFKIQFI…RPTQEKIFVK (135 aa). 2 N-linked (GlcNAc...) asparagine glycosylation sites follow: N362 and N397.

Belongs to the AB hydrolase superfamily. Lipase family. Homodimer.

The protein resides in the secreted. It catalyses the reaction a triacylglycerol + H2O = a diacylglycerol + a fatty acid + H(+). It carries out the reaction a 1-acyl-sn-glycero-3-phosphocholine + H2O = sn-glycerol 3-phosphocholine + a fatty acid + H(+). The catalysed reaction is a 1,2-diacyl-sn-glycero-3-phosphocholine + H2O = a 2-acyl-sn-glycero-3-phosphocholine + a fatty acid + H(+). The enzyme catalyses 1,2,3-tri-(9Z-octadecenoyl)-glycerol + H2O = di-(9Z)-octadecenoylglycerol + (9Z)-octadecenoate + H(+). It catalyses the reaction 1,2-di-(9Z-octadecenoyl)-sn-glycero-3-phosphocholine + H2O = (9Z-octadecenoyl)-sn-glycero-3-phosphocholine + (9Z)-octadecenoate + H(+). It carries out the reaction 1,2,3-tributanoylglycerol + H2O = dibutanoylglycerol + butanoate + H(+). The catalysed reaction is 1,2-dihexadecanoyl-sn-glycero-3-phosphocholine + H2O = hexadecanoyl-sn-glycero-3-phosphocholine + hexadecanoate + H(+). The enzyme catalyses 1,2-di-(9Z-octadecenoyl)-sn-glycerol + H2O = 2-(9Z-octadecenoyl)-glycerol + (9Z)-octadecenoate + H(+). It catalyses the reaction 1,2,3-tri-(9Z-octadecenoyl)-glycerol + H2O = 2,3-di-(9Z)-octadecenoyl-sn-glycerol + (9Z)-octadecenoate + H(+). It carries out the reaction 1-(9Z-octadecenoyl)-sn-glycero-3-phospho-L-serine + H2O = sn-glycero-3-phospho-L-serine + (9Z)-octadecenoate + H(+). The catalysed reaction is 1-hexadecanoyl-sn-glycero-3-phosphocholine + H2O = sn-glycerol 3-phosphocholine + hexadecanoate + H(+). The enzyme catalyses 1,3-di-(9Z-octadecenoyl)-glycerol + H2O = 3-(9Z-octadecenoyl)-sn-glycerol + (9Z)-octadecenoate + H(+). Its activity is regulated as follows. Phospholipase A1 and triacylglycerol lipase are inhibited by sphingomyelin. Catalyzes the hydrolysis of triglycerides and phospholipids present in circulating plasma lipoproteins, including chylomicrons, intermediate density lipoproteins (IDL), low density lipoproteins (LDL) of large size and high density lipoproteins (HDL), releasing free fatty acids (FFA) and smaller lipoprotein particles. Also exhibits lysophospholipase activity. Can hydrolyze both neutral lipid and phospholipid substrates but shows a greater binding affinity for neutral lipid substrates than phospholipid substrates. In native LDL, preferentially hydrolyzes the phosphatidylcholine species containing polyunsaturated fatty acids at sn-2 position. The sequence is that of Hepatic triacylglycerol lipase (LIPC) from Homo sapiens (Human).